A 170-amino-acid polypeptide reads, in one-letter code: Small ribosomal subunit protein mS41 (170 aa).

The N-terminal 20 residues, 1-20, are a transit peptide targeting the mitochondrion; sequence MFRTLLSSTVRSIQLKPVTS.

Belongs to the mitochondrion-specific ribosomal protein mS41 family. As to quaternary structure, component of the mitochondrial small ribosomal subunit (mt-SSU).

The protein localises to the mitochondrion. Functionally, component of the mitochondrial ribosome (mitoribosome), a dedicated translation machinery responsible for the synthesis of mitochondrial genome-encoded proteins, including at least some of the essential transmembrane subunits of the mitochondrial respiratory chain. The mitoribosomes are attached to the mitochondrial inner membrane and translation products are cotranslationally integrated into the membrane. mS41 is involved in telomere length regulation. The protein is Small ribosomal subunit protein mS41 (FYV4) of Candida albicans (strain SC5314 / ATCC MYA-2876) (Yeast).